The primary structure comprises 379 residues: UDP-4-amino-4-deoxy-L-arabinose--oxoglutarate aminotransferase (379 aa).

Lysine 182 is subject to N6-(pyridoxal phosphate)lysine.

The protein belongs to the DegT/DnrJ/EryC1 family. ArnB subfamily. In terms of assembly, homodimer. Requires pyridoxal 5'-phosphate as cofactor.

It carries out the reaction UDP-4-amino-4-deoxy-beta-L-arabinose + 2-oxoglutarate = UDP-beta-L-threo-pentopyranos-4-ulose + L-glutamate. It functions in the pathway nucleotide-sugar biosynthesis; UDP-4-deoxy-4-formamido-beta-L-arabinose biosynthesis; UDP-4-deoxy-4-formamido-beta-L-arabinose from UDP-alpha-D-glucuronate: step 2/3. It participates in bacterial outer membrane biogenesis; lipopolysaccharide biosynthesis. Catalyzes the conversion of UDP-4-keto-arabinose (UDP-Ara4O) to UDP-4-amino-4-deoxy-L-arabinose (UDP-L-Ara4N). The modified arabinose is attached to lipid A and is required for resistance to polymyxin and cationic antimicrobial peptides. This is UDP-4-amino-4-deoxy-L-arabinose--oxoglutarate aminotransferase from Klebsiella pneumoniae subsp. pneumoniae (strain ATCC 700721 / MGH 78578).